Reading from the N-terminus, the 100-residue chain is Urease subunit gamma (100 aa).

It belongs to the urease gamma subunit family. Heterotrimer of UreA (gamma), UreB (beta) and UreC (alpha) subunits. Three heterotrimers associate to form the active enzyme.

Its subcellular location is the cytoplasm. The catalysed reaction is urea + 2 H2O + H(+) = hydrogencarbonate + 2 NH4(+). It functions in the pathway nitrogen metabolism; urea degradation; CO(2) and NH(3) from urea (urease route): step 1/1. In Citrobacter koseri (strain ATCC BAA-895 / CDC 4225-83 / SGSC4696), this protein is Urease subunit gamma.